A 372-amino-acid chain; its full sequence is Tyrosine--tRNA ligase 1 (372 aa).

L-tyrosine contacts are provided by Tyr37, Tyr169, Gln173, Asp176, and Gln191. Positions 246–250 match the 'KMSKS' region motif; sequence KMSKS. Lys249 lines the ATP pocket.

The protein belongs to the class-I aminoacyl-tRNA synthetase family. TyrS type 4 subfamily. As to quaternary structure, homodimer.

It localises to the cytoplasm. The enzyme catalyses tRNA(Tyr) + L-tyrosine + ATP = L-tyrosyl-tRNA(Tyr) + AMP + diphosphate + H(+). Catalyzes the attachment of tyrosine to tRNA(Tyr) in a two-step reaction: tyrosine is first activated by ATP to form Tyr-AMP and then transferred to the acceptor end of tRNA(Tyr). This chain is Tyrosine--tRNA ligase 1, found in Pyrobaculum aerophilum (strain ATCC 51768 / DSM 7523 / JCM 9630 / CIP 104966 / NBRC 100827 / IM2).